We begin with the raw amino-acid sequence, 444 residues long: Nuclear distribution protein nudF (444 aa).

Positions 9–41 (QAEALHKAMLAYLSVINAPQTAETLREELHFDE) constitute a LisH domain. Residues 60–88 (TGIARLQRRINDLEAEVRSLQAELEASPS) are a coiled coil. The tract at residues 83-107 (LEASPSAARAKNQDPTNWLPKPSST) is disordered. 7 WD repeats span residues 112 to 153 (SHRD…RTLK), 155 to 195 (HIRG…ANIR), 199 to 239 (GHDH…CVKV), 243 to 282 (ATES…PKAA), 285 to 345 (GHEN…IKTL), 347 to 386 (GHDN…RLVK), and 391 to 437 (AHEH…GCAD).

Belongs to the WD repeat LIS1/nudF family. In terms of assembly, interacts with dynein. Self-associates. Interacts with bnfA, nudC and nudE.

Its subcellular location is the cytoplasm. The protein resides in the cytoskeleton. It is found in the spindle pole. Its function is as follows. Positively regulates the activity of the minus-end directed microtubule motor protein dynein. May enhance dynein-mediated microtubule sliding by targeting dynein to the microtubule plus end. Required for nuclear migration during vegetative growth as well as development. Required for retrograde early endosome (EE) transport from the hyphal tip. Required for localization of dynein to the mitotic spindle poles. Recruits additional proteins to the dynein complex at SPBs. This is Nuclear distribution protein nudF from Emericella nidulans (strain FGSC A4 / ATCC 38163 / CBS 112.46 / NRRL 194 / M139) (Aspergillus nidulans).